Here is a 411-residue protein sequence, read N- to C-terminus: Bifunctional protein GlmU (411 aa).

A pyrophosphorylase region spans residues 1 to 204 (MDAIILCAGK…NGKLHGVELK (204 aa)). UTP is bound by residues 6–9 (LCAG), glutamine 74, and glycine 79. Positions 80, 130, 142, and 158 each coordinate N-acetyl-alpha-D-glucosamine 1-phosphate. Residues 205 to 224 (GYWNDIGHPWDVLSANNHFL) are linker. An N-acetyltransferase region spans residues 225 to 411 (NKIISKVSGK…DELVITKKRN (187 aa)). Histidine 308 acts as the Proton acceptor in catalysis. Alanine 384 and lysine 401 together coordinate acetyl-CoA.

This sequence in the N-terminal section; belongs to the N-acetylglucosamine-1-phosphate uridyltransferase family. It in the C-terminal section; belongs to the transferase hexapeptide repeat family.

The catalysed reaction is N-acetyl-alpha-D-glucosamine 1-phosphate + UTP + H(+) = UDP-N-acetyl-alpha-D-glucosamine + diphosphate. It catalyses the reaction alpha-D-glucosamine 1-phosphate + acetyl-CoA = N-acetyl-alpha-D-glucosamine 1-phosphate + CoA + H(+). It functions in the pathway nucleotide-sugar biosynthesis; UDP-N-acetyl-alpha-D-glucosamine biosynthesis; N-acetyl-alpha-D-glucosamine 1-phosphate from alpha-D-glucosamine 6-phosphate (route II): step 2/2. Its pathway is nucleotide-sugar biosynthesis; UDP-N-acetyl-alpha-D-glucosamine biosynthesis; UDP-N-acetyl-alpha-D-glucosamine from N-acetyl-alpha-D-glucosamine 1-phosphate: step 1/1. Functionally, catalyzes the last two sequential reactions in the de novo biosynthetic pathway for UDP-N-acetyl-glucosamine (UDP-GlcNAc). Responsible for the acetylation of GlcN-1-P to GlcNAc-1-P, and for the uridyl transfer from UTP to GlcNAc-1-P, to produce UDP-GlcNAc and pyrophosphate. The polypeptide is Bifunctional protein GlmU (Methanococcus maripaludis (strain DSM 14266 / JCM 13030 / NBRC 101832 / S2 / LL)).